The primary structure comprises 258 residues: MSVEDTQPLITHLIELRKRLLNCIISVIVIFLCLVYFANDIYHLVSAPLIKQLPQGSTMIATDVASPFFTPIKLTFMVSLILSAPVILYQVWAFIAPALYKHERRLVVPLLVSSSLLFYIGMAFAYFVVFPLAFGFLANTAPEGVQVSTDIASYLSFVMALFMAFGVSFEVPVAIVLLCWMGITSPEDLRKKRPYVLVGAFVVGMLLTPPDVFSQTLLAIPMYCLFEIGVFFSRFYVGKGRNREEENDAEAESEKTEE.

The Cytoplasmic segment spans residues 2-23 (SVEDTQPLITHLIELRKRLLNC). Residues 24–44 (IISVIVIFLCLVYFANDIYHL) form a helical membrane-spanning segment. The Periplasmic segment spans residues 45–75 (VSAPLIKQLPQGSTMIATDVASPFFTPIKLT). A helical membrane pass occupies residues 76-96 (FMVSLILSAPVILYQVWAFIA). Residues 97 to 115 (PALYKHERRLVVPLLVSSS) lie on the Cytoplasmic side of the membrane. The helical transmembrane segment at 116–136 (LLFYIGMAFAYFVVFPLAFGF) threads the bilayer. Residues 137 to 156 (LANTAPEGVQVSTDIASYLS) are Periplasmic-facing. Residues 157-177 (FVMALFMAFGVSFEVPVAIVL) form a helical membrane-spanning segment. Over 178-192 (LCWMGITSPEDLRKK) the chain is Cytoplasmic. Residues 193–210 (RPYVLVGAFVVGMLLTPP) traverse the membrane as a helical segment. Position 211 (Asp-211) is a topological domain, periplasmic. The chain crosses the membrane as a helical span at residues 212 to 232 (VFSQTLLAIPMYCLFEIGVFF). Residues 233–258 (SRFYVGKGRNREEENDAEAESEKTEE) lie on the Cytoplasmic side of the membrane.

Belongs to the TatC family. As to quaternary structure, the Tat system comprises two distinct complexes: a TatABC complex, containing multiple copies of TatA, TatB and TatC subunits, and a separate TatA complex, containing only TatA subunits. Substrates initially bind to the TatABC complex, which probably triggers association of the separate TatA complex to form the active translocon.

It is found in the cell inner membrane. Functionally, part of the twin-arginine translocation (Tat) system that transports large folded proteins containing a characteristic twin-arginine motif in their signal peptide across membranes. Together with TatB, TatC is part of a receptor directly interacting with Tat signal peptides. This chain is Sec-independent protein translocase protein TatC, found in Escherichia coli O6:H1 (strain CFT073 / ATCC 700928 / UPEC).